We begin with the raw amino-acid sequence, 296 residues long: tRNA dimethylallyltransferase (296 aa).

2–9 contributes to the ATP binding site; sequence GPTASGKT. 4-9 serves as a coordination point for substrate; sequence TASGKT. 3 interaction with substrate tRNA regions span residues 27-30, 151-155, and 232-237; these read DSAL, QRLAR, and RCVGYR.

It belongs to the IPP transferase family. In terms of assembly, monomer. It depends on Mg(2+) as a cofactor.

The enzyme catalyses adenosine(37) in tRNA + dimethylallyl diphosphate = N(6)-dimethylallyladenosine(37) in tRNA + diphosphate. In terms of biological role, catalyzes the transfer of a dimethylallyl group onto the adenine at position 37 in tRNAs that read codons beginning with uridine, leading to the formation of N6-(dimethylallyl)adenosine (i(6)A). In Shewanella pealeana (strain ATCC 700345 / ANG-SQ1), this protein is tRNA dimethylallyltransferase.